The chain runs to 285 residues: CCR4-NOT transcription complex subunit 7 (285 aa).

Residues Asp40, Glu42, Asp161, Asp230, and Glu278 each contribute to the a divalent metal cation site.

It belongs to the CAF1 family. Component of the CCR4-NOT complex. Requires Mn(2+) as cofactor. Mg(2+) serves as cofactor. The cofactor is Co(2+).

It localises to the nucleus. It is found in the cytoplasm. It carries out the reaction Exonucleolytic cleavage of poly(A) to 5'-AMP.. Functionally, has 3'-5' poly(A) exoribonuclease activity for synthetic poly(A) RNA substrate. Catalytic component of the CCR4-NOT complex which is one of the major cellular mRNA deadenylases and is linked to various cellular processes including bulk mRNA degradation, miRNA-mediated repression, translational repression during translational initiation and general transcription regulation. During miRNA-mediated repression the complex also seems to act as translational repressor during translational initiation. Additional complex functions may be a consequence of its influence on mRNA expression. This is CCR4-NOT transcription complex subunit 7 (CNOT7) from Gallus gallus (Chicken).